The chain runs to 257 residues: Tryptophan synthase alpha chain (257 aa).

Catalysis depends on proton acceptor residues Glu51 and Asp62.

The protein belongs to the TrpA family. As to quaternary structure, tetramer of two alpha and two beta chains.

The enzyme catalyses (1S,2R)-1-C-(indol-3-yl)glycerol 3-phosphate + L-serine = D-glyceraldehyde 3-phosphate + L-tryptophan + H2O. It functions in the pathway amino-acid biosynthesis; L-tryptophan biosynthesis; L-tryptophan from chorismate: step 5/5. The alpha subunit is responsible for the aldol cleavage of indoleglycerol phosphate to indole and glyceraldehyde 3-phosphate. This is Tryptophan synthase alpha chain from Nitratidesulfovibrio vulgaris (strain DP4) (Desulfovibrio vulgaris).